Here is a 357-residue protein sequence, read N- to C-terminus: Protein RecA (357 aa).

Position 67-74 (67-74 (GPESSGKT)) interacts with ATP. Residues 334–357 (ELKPAAAGNSHDEDELAGEGKEEF) form a disordered region.

This sequence belongs to the RecA family.

It localises to the cytoplasm. Functionally, can catalyze the hydrolysis of ATP in the presence of single-stranded DNA, the ATP-dependent uptake of single-stranded DNA by duplex DNA, and the ATP-dependent hybridization of homologous single-stranded DNAs. It interacts with LexA causing its activation and leading to its autocatalytic cleavage. In Pectobacterium atrosepticum (strain SCRI 1043 / ATCC BAA-672) (Erwinia carotovora subsp. atroseptica), this protein is Protein RecA.